A 533-amino-acid chain; its full sequence is Putative sel1-like repeat-containing protein L21 (533 aa).

5 Sel1-like repeats span residues V105 to L140, S141 to Y172, Y173 to C206, N207 to N242, and Y243 to H278.

This Acanthamoeba polyphaga mimivirus (APMV) protein is Putative sel1-like repeat-containing protein L21.